The chain runs to 115 residues: Large ribosomal subunit protein bL19 (115 aa).

Belongs to the bacterial ribosomal protein bL19 family.

Its function is as follows. This protein is located at the 30S-50S ribosomal subunit interface and may play a role in the structure and function of the aminoacyl-tRNA binding site. The polypeptide is Large ribosomal subunit protein bL19 (Nitrosococcus oceani (strain ATCC 19707 / BCRC 17464 / JCM 30415 / NCIMB 11848 / C-107)).